The sequence spans 401 residues: MSELSYLEKLMDGVEVEWLPLSKVFNLRNGYTPSKTKKEFWANGDIPWFRMDDIRENGRILGSSLQKISSCAVKGGKLFPENSILISTSATIGEHALITVPHLANQRFTCLALKESYADCFDIKFLFYYCFSLAEWCRKNTTMSSFASVDMDGFKKFLIPRPCPDNPEKSLAIQSEIVRILDKFSALTAELTAELTAELSMRKKQYNYYRDQLLSFKEDEVEGKRKTLGEIMKMRAGQHISAHNIIERKEESYIYPCFGGNGIRGYVKEKSHDGEHLLIGRQGALCGNVQRMKGQFYATEHAVVVSVMPGINIDWAFHMLTAMNLNQYASKSAQPGLAVGKLQELKLFVPSIERQIYIAAILDKFDTLTNSITEVSRVKSSCARNSTNIIEICYLVSRSRK.

It belongs to the type-I restriction system S methylase family. The type I restriction/modification system is composed of three polypeptides R, M and S; the restriction enzyme has stoichiometry R(2)M(2)S(1) while the methyltransferase is M(2)S(1).

Functionally, the specificity (S) subunit of a type I restriction enzyme; this subunit dictates DNA sequence specificity. The M and S subunits together form a methyltransferase (MTase) that methylates two adenine residues of the sequence 5'-CCAN(7)ATGC-3'. In the presence of the R subunit the complex can also act as an endonuclease, binding to the same target sequence but cutting the DNA some distance from this site. Whether the DNA is cut or modified depends on the methylation state of the target sequence. When the target site is unmodified, the DNA is cut. When the target site is hemimethylated, the complex acts as a maintenance MTase modifying the DNA so that both strands become methylated. After locating a non-methylated recognition site, the enzyme complex serves as a molecular motor that translocates DNA in an ATP-dependent manner until a collision occurs that triggers cleavage. This Escherichia coli protein is Type I restriction enzyme EcoprrI specificity subunit (prrB).